The chain runs to 249 residues: Ribonuclease PH (249 aa).

Phosphate is bound by residues Arg86 and 124-126; that span reads GTR.

This sequence belongs to the RNase PH family. In terms of assembly, homohexameric ring arranged as a trimer of dimers.

The enzyme catalyses tRNA(n+1) + phosphate = tRNA(n) + a ribonucleoside 5'-diphosphate. In terms of biological role, phosphorolytic 3'-5' exoribonuclease that plays an important role in tRNA 3'-end maturation. Removes nucleotide residues following the 3'-CCA terminus of tRNAs; can also add nucleotides to the ends of RNA molecules by using nucleoside diphosphates as substrates, but this may not be physiologically important. Probably plays a role in initiation of 16S rRNA degradation (leading to ribosome degradation) during starvation. This is Ribonuclease PH from Clostridium botulinum (strain Eklund 17B / Type B).